The following is a 357-amino-acid chain: Glutamate 5-kinase (357 aa).

Residue K7 coordinates ATP. S43, D130, and N142 together coordinate substrate. ATP contacts are provided by residues 162–163 and 205–211; these read TD and TGGMTTK. The PUA domain maps to 270-341; it reads EGELCLDQGA…QALSVVTDAE (72 aa).

Belongs to the glutamate 5-kinase family.

Its subcellular location is the cytoplasm. The catalysed reaction is L-glutamate + ATP = L-glutamyl 5-phosphate + ADP. The protein operates within amino-acid biosynthesis; L-proline biosynthesis; L-glutamate 5-semialdehyde from L-glutamate: step 1/2. Catalyzes the transfer of a phosphate group to glutamate to form L-glutamate 5-phosphate. The sequence is that of Glutamate 5-kinase from Synechococcus sp. (strain CC9902).